Consider the following 465-residue polypeptide: GTPase Der (465 aa).

EngA-type G domains follow at residues 3–167 and 179–352; these read PLVA…PERS and IHIA…VSAL. Residues 9-16, 57-61, 119-122, 185-192, 232-236, and 297-300 each bind GTP; these read GRPNVGKS, DTGGM, NKID, DTAGL, and NKWD. Positions 353-437 constitute a KH-like domain; that stretch reads RQFSTSEVNK…PVRFLFREGD (85 aa).

The protein belongs to the TRAFAC class TrmE-Era-EngA-EngB-Septin-like GTPase superfamily. EngA (Der) GTPase family. As to quaternary structure, associates with the 50S ribosomal subunit.

Its function is as follows. GTPase that plays an essential role in the late steps of ribosome biogenesis. The polypeptide is GTPase Der (Xylella fastidiosa (strain M23)).